We begin with the raw amino-acid sequence, 203 residues long: Dual-action ribosomal maturation protein DarP (203 aa).

2 disordered regions span residues 1-31 and 178-203; these read MTRK…SQLK and NADG…DRDA. Residues 21–31 are compositionally biased toward basic and acidic residues; sequence GYDRPSKSQLK. Residues 188-203 show a composition bias toward acidic residues; that stretch reads SEADDAQDDEDDDRDA.

Belongs to the DarP family.

The protein resides in the cytoplasm. In terms of biological role, member of a network of 50S ribosomal subunit biogenesis factors which assembles along the 30S-50S interface, preventing incorrect 23S rRNA structures from forming. Promotes peptidyl transferase center (PTC) maturation. The sequence is that of Dual-action ribosomal maturation protein DarP from Paraburkholderia xenovorans (strain LB400).